A 116-amino-acid chain; its full sequence is NADH-ubiquinone oxidoreductase chain 3 (116 aa).

Transmembrane regions (helical) follow at residues 3–23, 56–76, and 88–108; these read LFAT…LVSF, FFLV…LLPL, and TLFW…YEWA.

This sequence belongs to the complex I subunit 3 family. As to quaternary structure, core subunit of respiratory chain NADH dehydrogenase (Complex I) which is composed of 45 different subunits.

It localises to the mitochondrion inner membrane. It catalyses the reaction a ubiquinone + NADH + 5 H(+)(in) = a ubiquinol + NAD(+) + 4 H(+)(out). In terms of biological role, core subunit of the mitochondrial membrane respiratory chain NADH dehydrogenase (Complex I) which catalyzes electron transfer from NADH through the respiratory chain, using ubiquinone as an electron acceptor. Essential for the catalytic activity of complex I. This Danio rerio (Zebrafish) protein is NADH-ubiquinone oxidoreductase chain 3 (mt-nd3).